The sequence spans 400 residues: Elongation factor Tu 2 (400 aa).

In terms of domain architecture, tr-type G spans 10–209 (KPHVNIGTIG…AVDEYIPTPQ (200 aa)). Residues 19–26 (GHVDHGKT) are G1. 19–26 (GHVDHGKT) is a GTP binding site. T26 serves as a coordination point for Mg(2+). A G2 region spans residues 60 to 64 (GITIN). A G3 region spans residues 81-84 (DCPG). Residues 81–85 (DCPGH) and 136–139 (NKAD) contribute to the GTP site. Residues 136–139 (NKAD) are G4. The tract at residues 174-176 (SAL) is G5.

The protein belongs to the TRAFAC class translation factor GTPase superfamily. Classic translation factor GTPase family. EF-Tu/EF-1A subfamily. As to quaternary structure, monomer.

Its subcellular location is the cytoplasm. It catalyses the reaction GTP + H2O = GDP + phosphate + H(+). Its function is as follows. GTP hydrolase that promotes the GTP-dependent binding of aminoacyl-tRNA to the A-site of ribosomes during protein biosynthesis. This is Elongation factor Tu 2 from Pelotomaculum thermopropionicum (strain DSM 13744 / JCM 10971 / SI).